Here is a 426-residue protein sequence, read N- to C-terminus: Transcription factor bHLH60 (426 aa).

Polar residues-rich tracts occupy residues Q117–N137 and T148–R172. The tract at residues Q117–Y201 is disordered. Over residues K191–P200 the composition is skewed to basic and acidic residues. In terms of domain architecture, bHLH spans Q210–L307. A disordered region spans residues H367–N398.

Homodimer. Expressed constitutively in roots, leaves, stems, and flowers.

The protein localises to the nucleus. The polypeptide is Transcription factor bHLH60 (BHLH60) (Arabidopsis thaliana (Mouse-ear cress)).